The primary structure comprises 295 residues: UDP-N-acetylenolpyruvoylglucosamine reductase (295 aa).

In terms of domain architecture, FAD-binding PCMH-type spans 24-188; sequence KVGGNAEIFF…LKAIFKANKG (165 aa). Arg-168 is an active-site residue. Residue Ser-217 is the Proton donor of the active site. The active site involves Glu-287.

It belongs to the MurB family. It depends on FAD as a cofactor.

It localises to the cytoplasm. It carries out the reaction UDP-N-acetyl-alpha-D-muramate + NADP(+) = UDP-N-acetyl-3-O-(1-carboxyvinyl)-alpha-D-glucosamine + NADPH + H(+). It functions in the pathway cell wall biogenesis; peptidoglycan biosynthesis. Cell wall formation. This is UDP-N-acetylenolpyruvoylglucosamine reductase from Rickettsia typhi (strain ATCC VR-144 / Wilmington).